Consider the following 957-residue polypeptide: Glycine dehydrogenase (decarboxylating) (957 aa).

Lys-708 bears the N6-(pyridoxal phosphate)lysine mark.

The protein belongs to the GcvP family. In terms of assembly, the glycine cleavage system is composed of four proteins: P, T, L and H. Requires pyridoxal 5'-phosphate as cofactor.

The enzyme catalyses N(6)-[(R)-lipoyl]-L-lysyl-[glycine-cleavage complex H protein] + glycine + H(+) = N(6)-[(R)-S(8)-aminomethyldihydrolipoyl]-L-lysyl-[glycine-cleavage complex H protein] + CO2. The glycine cleavage system catalyzes the degradation of glycine. The P protein binds the alpha-amino group of glycine through its pyridoxal phosphate cofactor; CO(2) is released and the remaining methylamine moiety is then transferred to the lipoamide cofactor of the H protein. The polypeptide is Glycine dehydrogenase (decarboxylating) (Salmonella paratyphi B (strain ATCC BAA-1250 / SPB7)).